Reading from the N-terminus, the 505-residue chain is MLDKRCSGILLHPTSLPSRFGIGDLGDGAFQFIDFLADADQSVWQILPLGPTGFGNSPYLCYSALAINPWLISLDRLAEEGFLPPSLLDQAPPFTNPRVDYDQAIAYKSQVLKQAFAQFRTNIELAIEQEFAEFCQAQSDWLADYALFMAIKEAHNGAGWHQWDKDIAWREPEALKIWGDRLKTEVLYHQFLQFLGFRQWQEVKAYANQRHIAIFGDLPIYVAHDSADVWANPENFCLDPETGEAAMMAGVPPDYFSATGQLWGNPVYDWETLKATGFAWWIKRFKANLQYLDIVRIDHFRGFESYWGVPQGEKTAENGEWYPAPGKEFFQALGKALGDNLPIVAEDLGVITPEVEALRDEFNFPGMKVLHFAFDSDRGNPFLPFNYSNGNAVVYTGTHDNDTTVGWFQERSEDDQQKVINYLGCVCNEGIHWSLIRLASSSVAALAIFPLQDILGLGSDCRMNLPGTAAGNWGWRYHPDQLNDWLSGHLSFITELYGRRIYHTD.

The protein belongs to the disproportionating enzyme family.

It localises to the cytoplasm. It carries out the reaction Transfers a segment of a (1-&gt;4)-alpha-D-glucan to a new position in an acceptor, which may be glucose or a (1-&gt;4)-alpha-D-glucan.. This is 4-alpha-glucanotransferase (malQ) from Synechocystis sp. (strain ATCC 27184 / PCC 6803 / Kazusa).